A 23-amino-acid polypeptide reads, in one-letter code: Ocellatin-LB2 (23 aa).

Asn-23 bears the Asparagine amide mark.

In terms of tissue distribution, expressed by the skin glands.

The protein localises to the secreted. Antibacterial peptide that inhibits the Gram-negative bacterium A.actinomycetemcomitans ATCC 29522 (MIC=210 uM). No activity against the bacteria E.coli ATCC 25922 and S.aureus ATCC 25923, or the fungi C.albicans ATCC 18804 and C.lusitaniae ATCC 56936. Does not show hemolytic activity towards rabbit erythrocytes. The protein is Ocellatin-LB2 of Leptodactylus labyrinthicus (Labyrinth frog).